The following is a 170-amino-acid chain: Small ribosomal subunit protein uS5 (170 aa).

In terms of domain architecture, S5 DRBM spans 12–75 (WSELLVSVRR…NAAKKSMIRV (64 aa)).

This sequence belongs to the universal ribosomal protein uS5 family. As to quaternary structure, part of the 30S ribosomal subunit. Contacts proteins S4 and S8.

With S4 and S12 plays an important role in translational accuracy. Functionally, located at the back of the 30S subunit body where it stabilizes the conformation of the head with respect to the body. The protein is Small ribosomal subunit protein uS5 of Wolbachia sp. subsp. Brugia malayi (strain TRS).